The following is a 293-amino-acid chain: Glutamyl-Q tRNA(Asp) synthetase (293 aa).

L-glutamate contacts are provided by residues R9–S13 and E45. A 'HIGH' region motif is present at residues P12 to S22. Positions 101, 103, 115, and 119 each coordinate Zn(2+). L-glutamate is bound by residues Y172 and R190. Positions K228–Q232 match the 'KMSKS' region motif. Position 231 (K231) interacts with ATP.

It belongs to the class-I aminoacyl-tRNA synthetase family. GluQ subfamily. Requires Zn(2+) as cofactor.

Catalyzes the tRNA-independent activation of glutamate in presence of ATP and the subsequent transfer of glutamate onto a tRNA(Asp). Glutamate is transferred on the 2-amino-5-(4,5-dihydroxy-2-cyclopenten-1-yl) moiety of the queuosine in the wobble position of the QUC anticodon. The protein is Glutamyl-Q tRNA(Asp) synthetase of Shewanella frigidimarina (strain NCIMB 400).